A 271-amino-acid polypeptide reads, in one-letter code: Energy-coupling factor transporter ATP-binding protein EcfA (271 aa).

An ABC transporter domain is found at 2 to 231 (ISIQNLTFYY…PLFLQQYKLN (230 aa)). 34-41 (GHNGSGKS) contacts ATP.

This sequence belongs to the ABC transporter superfamily. Energy-coupling factor EcfA family. Forms a stable energy-coupling factor (ECF) transporter complex composed of 2 membrane-embedded substrate-binding proteins (S component), 2 ATP-binding proteins (A component) and 2 transmembrane proteins (T component).

The protein localises to the cell membrane. In terms of biological role, ATP-binding (A) component of a common energy-coupling factor (ECF) ABC-transporter complex. Unlike classic ABC transporters this ECF transporter provides the energy necessary to transport a number of different substrates. The chain is Energy-coupling factor transporter ATP-binding protein EcfA from Onion yellows phytoplasma (strain OY-M).